We begin with the raw amino-acid sequence, 281 residues long: Tumor necrosis factor ligand superfamily member 10 (281 aa).

At 1–17 (MAMMEVQGGPSLGQTCV) the chain is on the cytoplasmic side. The helical; Signal-anchor for type II membrane protein transmembrane segment at 18-38 (LIVIFTVLLQSLCVAVTYVYF) threads the bilayer. The Extracellular segment spans residues 39–281 (TNELKQMQDK…ASFFGAFLVG (243 aa)). Positions 122–280 (VAAHITGTRG…EASFFGAFLV (159 aa)) constitute a THD domain. Residues 124–144 (AHITGTRGRSNTLSSPNSKNE) are disordered. Residues 130–141 (RGRSNTLSSPNS) are compositionally biased toward polar residues. Cys230 serves as a coordination point for Zn(2+).

The protein belongs to the tumor necrosis factor family. Homotrimer. One TNFSF10 homotrimer interacts with three TNFSF10A mononers. One TNFSF10 homotrimer interacts with three TNFSF10B mononers. Post-translationally, tyrosine phosphorylated by PKDCC/VLK. Widespread; most predominant in spleen, lung and prostate.

Its subcellular location is the cell membrane. It is found in the secreted. Its function is as follows. Cytokine that binds to TNFRSF10A/TRAILR1, TNFRSF10B/TRAILR2, TNFRSF10C/TRAILR3, TNFRSF10D/TRAILR4 and possibly also to TNFRSF11B/OPG. Induces apoptosis. Its activity may be modulated by binding to the decoy receptors TNFRSF10C/TRAILR3, TNFRSF10D/TRAILR4 and TNFRSF11B/OPG that cannot induce apoptosis. The polypeptide is Tumor necrosis factor ligand superfamily member 10 (TNFSF10) (Homo sapiens (Human)).